The sequence spans 396 residues: Ribosomal RNA large subunit methyltransferase I (396 aa).

Residues 2-81 enclose the PUA domain; it reads TVRLILAKGR…ESIDIDFFVR (80 aa).

It belongs to the methyltransferase superfamily. RlmI family.

It localises to the cytoplasm. It carries out the reaction cytidine(1962) in 23S rRNA + S-adenosyl-L-methionine = 5-methylcytidine(1962) in 23S rRNA + S-adenosyl-L-homocysteine + H(+). Functionally, specifically methylates the cytosine at position 1962 (m5C1962) of 23S rRNA. This chain is Ribosomal RNA large subunit methyltransferase I, found in Erwinia tasmaniensis (strain DSM 17950 / CFBP 7177 / CIP 109463 / NCPPB 4357 / Et1/99).